Reading from the N-terminus, the 167-residue chain is uncharacterized protein (167 aa).

This is an uncharacterized protein from Xenopus laevis (African clawed frog).